Consider the following 1028-residue polypeptide: Beta-galactosidase (1028 aa).

Substrate contacts are provided by Asn104 and Asp203. Na(+) is bound at residue Asp203. The Mg(2+) site is built by Glu418, His420, and Glu463. Substrate is bound by residues Glu463 and 539–542 (EYAH). The active-site Proton donor is Glu463. The Nucleophile role is filled by Glu539. Mg(2+) is bound at residue Asn599. Positions 603 and 606 each coordinate Na(+). The substrate site is built by Asn606 and Trp1003.

Belongs to the glycosyl hydrolase 2 family. Homotetramer. Requires Mg(2+) as cofactor. The cofactor is Na(+).

It catalyses the reaction Hydrolysis of terminal non-reducing beta-D-galactose residues in beta-D-galactosides.. This is Beta-galactosidase from Enterobacter cloacae.